We begin with the raw amino-acid sequence, 20 residues long: Apidaecin 2+ (20 aa).

The span at 1-13 (GKPNKPRPAPIKP) shows a compositional bias: pro residues. The tract at residues 1–20 (GKPNKPRPAPIKPRPPHPRL) is disordered.

It is found in the secreted. Antimicrobial peptide active against many Gram-negative enterobacterial and plant-associated bacterial species. Not active against other bacterial species like H.pylori, P.mirabilis, B.pertussis or N.gonorrhoeae. In Pimpla disparis (Parasitic wasp), this protein is Apidaecin 2+.